Reading from the N-terminus, the 204-residue chain is Ribosome maturation factor RimP (204 aa).

The protein belongs to the RimP family.

It localises to the cytoplasm. Required for maturation of 30S ribosomal subunits. This is Ribosome maturation factor RimP from Albidiferax ferrireducens (strain ATCC BAA-621 / DSM 15236 / T118) (Rhodoferax ferrireducens).